Consider the following 570-residue polypeptide: Urease subunit alpha (570 aa).

Positions 131–570 (GGFDSHIHFI…LPLAQRYFMF (440 aa)) constitute a Urease domain. Residues His136, His138, and Lys219 each coordinate Ni(2+). Position 219 is an N6-carboxylysine (Lys219). His221 contacts substrate. Residues His248 and His274 each contribute to the Ni(2+) site. His322 acts as the Proton donor in catalysis. Asp362 contributes to the Ni(2+) binding site.

Belongs to the metallo-dependent hydrolases superfamily. Urease alpha subunit family. In terms of assembly, heterotrimer of UreA (gamma), UreB (beta) and UreC (alpha) subunits. Three heterotrimers associate to form the active enzyme. It depends on Ni cation as a cofactor. Post-translationally, carboxylation allows a single lysine to coordinate two nickel ions.

It is found in the cytoplasm. The catalysed reaction is urea + 2 H2O + H(+) = hydrogencarbonate + 2 NH4(+). Its pathway is nitrogen metabolism; urea degradation; CO(2) and NH(3) from urea (urease route): step 1/1. The protein is Urease subunit alpha of Rhodopseudomonas palustris (strain TIE-1).